The chain runs to 210 residues: MATNYHDITIAFAGVCQAVSLVQQFAHKGSADREIFANSIKSLLVTQPDSTLAVFDGQLANLKLGLETVQAQMGSPNGKLDTEIGRYWINVLALSQKLNKNPEAKAKLAERLQQIERQLPLYENDIMADQMIANLAAIYSDVISPLGSKIHVLGLQDYLVRPDIQQKIRASLLAGIRAGILWQQVGGTRWQFLFSRRKILNQTQQFYKSI.

A coiled-coil region spans residues 103–130; the sequence is EAKAKLAERLQQIERQLPLYENDIMADQ.

It belongs to the HflD family.

It localises to the cytoplasm. The protein resides in the cell inner membrane. The protein is High frequency lysogenization protein HflD homolog of Actinobacillus pleuropneumoniae serotype 3 (strain JL03).